The sequence spans 294 residues: 33 kDa chaperonin (294 aa).

Disulfide bonds link Cys-239/Cys-241 and Cys-272/Cys-275.

Belongs to the HSP33 family. Under oxidizing conditions two disulfide bonds are formed involving the reactive cysteines. Under reducing conditions zinc is bound to the reactive cysteines and the protein is inactive.

It is found in the cytoplasm. Its function is as follows. Redox regulated molecular chaperone. Protects both thermally unfolding and oxidatively damaged proteins from irreversible aggregation. Plays an important role in the bacterial defense system toward oxidative stress. The sequence is that of 33 kDa chaperonin from Listeria monocytogenes serotype 4a (strain HCC23).